A 419-amino-acid polypeptide reads, in one-letter code: Protein-lysine N-methyltransferase EFM2 (419 aa).

S-adenosyl-L-methionine-binding positions include tryptophan 222, 261-263, aspartate 290, tryptophan 318, and alanine 340; that span reads GAG.

It belongs to the class I-like SAM-binding methyltransferase superfamily. METTL21 family.

Its subcellular location is the cytoplasm. S-adenosyl-L-methionine-dependent protein-lysine N-methyltransferase that mono- and dimethylates elongation factor 2 (EFT1/EFT2) at 'Lys-613' and methylates elongation factor 3A (YEF3). The protein is Protein-lysine N-methyltransferase EFM2 of Saccharomyces cerevisiae (strain ATCC 204508 / S288c) (Baker's yeast).